The following is a 104-amino-acid chain: L-rhamnose mutarotase (104 aa).

Tyrosine 18 lines the substrate pocket. The Proton donor role is filled by histidine 22. Residues tyrosine 41 and 76-77 (WW) each bind substrate.

This sequence belongs to the rhamnose mutarotase family. Homodimer.

Its subcellular location is the cytoplasm. The enzyme catalyses alpha-L-rhamnose = beta-L-rhamnose. Its pathway is carbohydrate metabolism; L-rhamnose metabolism. Involved in the anomeric conversion of L-rhamnose. This chain is L-rhamnose mutarotase, found in Bacteroides thetaiotaomicron (strain ATCC 29148 / DSM 2079 / JCM 5827 / CCUG 10774 / NCTC 10582 / VPI-5482 / E50).